The following is a 681-amino-acid chain: DNA ligase (681 aa).

NAD(+)-binding positions include 44–48 (DYIYD), 94–95 (SL), and E124. K126 serves as the catalytic N6-AMP-lysine intermediate. R147, E181, K297, and K321 together coordinate NAD(+). C415, C418, C433, and C438 together coordinate Zn(2+). In terms of domain architecture, BRCT spans 598–681 (DETSFFYGKK…EAQAKEGTDK (84 aa)).

It belongs to the NAD-dependent DNA ligase family. LigA subfamily. Mg(2+) serves as cofactor. Requires Mn(2+) as cofactor.

The enzyme catalyses NAD(+) + (deoxyribonucleotide)n-3'-hydroxyl + 5'-phospho-(deoxyribonucleotide)m = (deoxyribonucleotide)n+m + AMP + beta-nicotinamide D-nucleotide.. DNA ligase that catalyzes the formation of phosphodiester linkages between 5'-phosphoryl and 3'-hydroxyl groups in double-stranded DNA using NAD as a coenzyme and as the energy source for the reaction. It is essential for DNA replication and repair of damaged DNA. This chain is DNA ligase, found in Leuconostoc citreum (strain KM20).